The primary structure comprises 141 residues: Large ribosomal subunit protein bL17 (141 aa).

It belongs to the bacterial ribosomal protein bL17 family. Part of the 50S ribosomal subunit. Contacts protein L32.

The protein is Large ribosomal subunit protein bL17 of Sinorhizobium fredii (strain NBRC 101917 / NGR234).